Consider the following 112-residue polypeptide: cAMP-regulated phosphoprotein 19 (112 aa).

N-acetylmethionine is present on Met1. Over residues 1–11 (MSAEVPEAASA) the composition is skewed to low complexity. Positions 1 to 49 (MSAEVPEAASAEEQKEMEDKVTSPEKAEEAKLKARYPHLGQKPGGSDFL) are disordered. Ser2 is modified (N-acetylserine). Phosphoserine occurs at positions 2 and 23. A compositionally biased stretch (basic and acidic residues) spans 12–32 (EEQKEMEDKVTSPEKAEEAKL). Residues Ser62 and Ser104 each carry the phosphoserine; by GWL modification. Residues 72–112 (MKNKQLPTATPDKTEVTGDHIPTPQDLPQRKPSLVASKLAG) are disordered. Ser104 is modified (phosphoserine; by PKA). Lys109 is modified (N6-acetyllysine).

Interacts (when phosphorylated at Ser-62) with PPP2R2D. Interacts with SNCA. Interacts with PPP2R2A; the interaction is direct and this interaction inhibits PP2A activity. In terms of processing, phosphorylation at Ser-62 by MASTL/GWL during mitosis is essential for interaction with PPP2R2D (PR55-delta) and subsequent inactivation of PP2A. Phosphorylated by PKA. As to expression, isoform ARPP-19 is found in all brain regions and also present in non-neuronal tissues. Isoform ARPP-16 is enriched in the caudate nucleus, found in low levels in cerebral cortex.

Its subcellular location is the cytoplasm. Functionally, protein phosphatase inhibitor that specifically inhibits protein phosphatase 2A (PP2A) during mitosis. Inhibition of PP2A is enhanced when ARPP19 is phosphorylated. When phosphorylated at Ser-62 during mitosis, specifically interacts with PPP2R2D (PR55-delta) and inhibits its activity, leading to inactivation of PP2A, an essential condition to keep cyclin-B1-CDK1 activity high during M phase. May indirectly enhance GAP-43 expression. The protein is cAMP-regulated phosphoprotein 19 (ARPP19) of Bos taurus (Bovine).